Here is a 1345-residue protein sequence, read N- to C-terminus: Aldehyde oxidase 2 (1345 aa).

A 2Fe-2S ferredoxin-type domain is found at Asp9–Val96. [2Fe-2S] cluster is bound by residues Cys48, Cys53, Cys56, and Cys78. Gln117 lines the Mo-molybdopterin pocket. Residues Cys118, Cys121, Cys153, and Cys155 each contribute to the [2Fe-2S] cluster site. Mo-molybdopterin is bound at residue Cys155. An FAD-binding PCMH-type domain is found at Phe238–Lys423. FAD contacts are provided by residues Leu266 to Leu273, Ala347, Ser356, His360, Asp369, and Leu413. Mo-molybdopterin-binding positions include Gly812–Phe813, Ala1094–Gly1097, Gln1209, and Leu1274. The Proton acceptor; for azaheterocycle hydroxylase activity role is filled by Glu1276.

The protein belongs to the xanthine dehydrogenase family. Homodimer. It depends on [2Fe-2S] cluster as a cofactor. FAD is required as a cofactor. Requires Mo-molybdopterin as cofactor. In terms of tissue distribution, expressed in olfactory mucosa epithelium (at protein level). Detected in skin.

Its subcellular location is the cytoplasm. The catalysed reaction is an aldehyde + O2 + H2O = a carboxylate + H2O2 + H(+). Its function is as follows. Oxidase with broad substrate specificity, oxidizing aromatic azaheterocycles, such as phthalazine, as well as aldehydes, such as benzaldehyde and retinal. Cannot use hypoxanthine as substrate. The polypeptide is Aldehyde oxidase 2 (Aox2) (Mus musculus (Mouse)).